A 197-amino-acid polypeptide reads, in one-letter code: Zinc finger protein 581 (197 aa).

Residues Met1 to Gln10 are compositionally biased toward pro residues. Residues Met1–His52 form a disordered region. A compositionally biased stretch (low complexity) spans Pro35 to Ala44. 4 C2H2-type zinc fingers span residues Tyr87–His109, Phe115–His137, His145–His167, and Phe173–His196.

The protein resides in the nucleus. Its function is as follows. May be involved in transcriptional regulation. The sequence is that of Zinc finger protein 581 (ZNF581) from Homo sapiens (Human).